The chain runs to 190 residues: Potassium-transporting ATPase KdpC subunit (190 aa).

A helical transmembrane segment spans residues 13–33 (VGFLLLTLMCGVVYPGIVTIF).

It belongs to the KdpC family. The system is composed of three essential subunits: KdpA, KdpB and KdpC.

It is found in the cell membrane. In terms of biological role, part of the high-affinity ATP-driven potassium transport (or Kdp) system, which catalyzes the hydrolysis of ATP coupled with the electrogenic transport of potassium into the cytoplasm. This subunit acts as a catalytic chaperone that increases the ATP-binding affinity of the ATP-hydrolyzing subunit KdpB by the formation of a transient KdpB/KdpC/ATP ternary complex. The sequence is that of Potassium-transporting ATPase KdpC subunit from Listeria monocytogenes serotype 4a (strain HCC23).